A 227-amino-acid chain; its full sequence is Lipoprotein-releasing system ATP-binding protein LolD (227 aa).

Residues 7–227 (LSCRNLGKSY…RLEGGRLVEA (221 aa)) form the ABC transporter domain. 43 to 50 (GTSGSGKS) lines the ATP pocket.

It belongs to the ABC transporter superfamily. Lipoprotein translocase (TC 3.A.1.125) family. The complex is composed of two ATP-binding proteins (LolD) and two transmembrane proteins (LolC and LolE).

The protein resides in the cell inner membrane. Functionally, part of the ABC transporter complex LolCDE involved in the translocation of mature outer membrane-directed lipoproteins, from the inner membrane to the periplasmic chaperone, LolA. Responsible for the formation of the LolA-lipoprotein complex in an ATP-dependent manner. The chain is Lipoprotein-releasing system ATP-binding protein LolD from Pseudomonas syringae pv. tomato (strain ATCC BAA-871 / DC3000).